Consider the following 205-residue polypeptide: Urease accessory protein UreE (205 aa).

Basic and acidic residues predominate over residues 170-192 (EHHGHSHSHSHDHDHDHDHDHQH). The segment at 170 to 205 (EHHGHSHSHSHDHDHDHDHDHQHGPCCSHGHHHGHR) is disordered.

Belongs to the UreE family.

Its subcellular location is the cytoplasm. Functionally, involved in urease metallocenter assembly. Binds nickel. Probably functions as a nickel donor during metallocenter assembly. In Burkholderia pseudomallei (strain 668), this protein is Urease accessory protein UreE.